Reading from the N-terminus, the 645-residue chain is Chlorophyllide a oxygenase, chloroplastic (645 aa).

The tract at residues 1 to 46 is disordered; it reads MLPASLQRKAAAVGGRGPTNQSRVAVRVSAQPKEAPPASTPIVEDP. Residues 105–218 are a coiled coil; it reads QARQKLEYLR…RKASDLDIKE (114 aa). Positions 258 to 287 are disordered; it reads ATTVTQEVPSTSYGTPVDRAPRRSKAAIRR. The segment covering 259 to 271 has biased composition (polar residues); the sequence is TTVTQEVPSTSYG. The region spanning 305–406 is the Rieske domain; the sequence is WYPAEFSARL…CAEKDGFIWV (102 aa). [2Fe-2S] cluster is bound by residues Cys-346, His-348, Cys-365, and His-368. Glu-446, Asp-450, His-453, and His-458 together coordinate Fe cation.

The protein localises to the plastid. Its subcellular location is the chloroplast inner membrane. It localises to the chloroplast thylakoid membrane. The catalysed reaction is chlorophyllide a + 2 NADPH + 2 O2 + 2 H(+) = chlorophyllide b + 2 NADP(+) + 3 H2O. In terms of biological role, catalyzes a two-step oxygenase reaction involved in the synthesis of chlorophyll b. Acts specifically on the non-esterified chlorophyllide a and not on chlorophyll a. This chain is Chlorophyllide a oxygenase, chloroplastic (CAO), found in Chlamydomonas reinhardtii (Chlamydomonas smithii).